Reading from the N-terminus, the 319-residue chain is MTKIELRALGNTGLKVSAVGFGASPLGSVFGPVAEDDAVATVREAFRLGINFFDTSPYYGGTLSEKMLGKGLKALQVPRSDYIVATKCGRYKEGFDFSAERVRKSIDESLERLQLDYVDILHCHDIEFGSLDQIVSETIPALQKLKQEGKTRFIGITGLPLDIFTYVLDRVPPGTVDVILSYCHYGVNDSTLLDLLPYLKSKGVGVISASPLAMGLLTEQGPPEWHPASPELKSASKAAVAHCKSKGKKITKLALQYSLANKEISSVLVGMSSVSQVEENVAAVTELESLGMDQETLSEVEAILEPVKNLTWPSGIHQN.

Residue tyrosine 59 is the Proton donor of the active site. Residues 122–269 form the SIS domain; it reads HCHDIEFGSL…ANKEISSVLV (148 aa). Histidine 124 lines the substrate pocket.

It belongs to the aldo/keto reductase family.

It carries out the reaction L-galactose + NAD(+) = L-galactono-1,4-lactone + NADH + H(+). Functionally, catalyzes the oxidation of L-galactose to L-galactono-1,4-lactone in the presence of NAD(+). Uses NAD(+) as a hydrogen acceptor much more efficiently than NADP(+). The chain is L-galactose dehydrogenase (LGALDH) from Arabidopsis thaliana (Mouse-ear cress).